The following is a 190-amino-acid chain: Capsid protein (190 aa).

The segment at 1–24 (MSTVGTGKLTRAQRRAAARKNKRN) is disordered. Position 2 is an N-acetylserine; by host (Ser-2). Residues 11-24 (RAQRRAAARKNKRN) are compositionally biased toward basic residues.

This sequence belongs to the bromovirus capsid protein family.

Its subcellular location is the virion. Its function is as follows. Capsid protein. Probably binds RNA and plays a role in packaging. The polypeptide is Capsid protein (Cowpea chlorotic mottle virus (CCMV)).